The sequence spans 527 residues: NAD(P)H-quinone oxidoreductase chain 4 1 (527 aa).

13 consecutive transmembrane segments (helical) span residues 6-26 (FPWLTAIILFPIVAALLVPII), 36-56 (WFALTVGLIDFALIIYAFYSS), 91-111 (LIILTGFITTLAILAAWPVTF), 113-133 (PKLFYFLMLLMYGGQIAVFAV), 136-156 (LLLFFLVWELELVPVYLILSI), 169-189 (FILYTAGGSLFILVAALTMAF), 212-232 (LFLYAGFLIAYGVKLPIFPLH), 243-263 (TAPAHMLLAGILLKMGGYALL), 275-295 (AVFAPVLVILGVVNIIYAALT), 306-326 (IAYSSISHMGFVLIGMASFTD), 331-351 (GAMLQMISHGLIGASLFFMVG), 387-407 (LALPGMSGFVAELMVFIGFAT), and 417-437 (VIIVFLAAIGVILTPIYLLSM).

Belongs to the complex I subunit 4 family.

The protein resides in the cellular thylakoid membrane. The enzyme catalyses a plastoquinone + NADH + (n+1) H(+)(in) = a plastoquinol + NAD(+) + n H(+)(out). The catalysed reaction is a plastoquinone + NADPH + (n+1) H(+)(in) = a plastoquinol + NADP(+) + n H(+)(out). Functionally, NDH-1 shuttles electrons from NAD(P)H, via FMN and iron-sulfur (Fe-S) centers, to quinones in the respiratory chain. The immediate electron acceptor for the enzyme in this species is believed to be plastoquinone. Couples the redox reaction to proton translocation (for every two electrons transferred, four hydrogen ions are translocated across the cytoplasmic membrane), and thus conserves the redox energy in a proton gradient. This Microcystis aeruginosa (strain NIES-843 / IAM M-2473) protein is NAD(P)H-quinone oxidoreductase chain 4 1.